Here is a 280-residue protein sequence, read N- to C-terminus: MEKIAIVTDSLSDIPEDLIKTYGIFVVPLTINIDGKSYKDGVDIKKEEFYKLLREGKMPTTTQASPVEFMEVFEDLLKSFDYVIAIILTSKFSGTYQSAVIARDMVDKNRIEVIDSRHFTLGNGMLVLKAARMAVEGASKEEIVSTVYETIPRIRGIMVFDSLDYLYRGGRLSRTQSIIGGILNVKPILTNEDGELKVIDKVRGQKKAIRWIIDYMKNTGIDFAEREVGLIHTDKEEFLNEIEAALRSELEITRFIRSQAGCGIGTHAGPDAAGVFFEEK.

The DegV domain occupies Ile-4–Glu-279. Hexadecanoate-binding residues include Thr-61 and Ser-93.

In terms of biological role, may bind long-chain fatty acids, such as palmitate, and may play a role in lipid transport or fatty acid metabolism. This is DegV domain-containing protein TTE1491 from Caldanaerobacter subterraneus subsp. tengcongensis (strain DSM 15242 / JCM 11007 / NBRC 100824 / MB4) (Thermoanaerobacter tengcongensis).